The primary structure comprises 334 residues: Phospholipase A1 2 (334 aa).

The signal sequence occupies residues 1-23; sequence MMNLKYLLFFCLVQALHYCYAYG. Residues 24–33 constitute a propeptide that is removed on maturation; sequence DPSLSNELDR. C37 and C120 form a disulfide bridge. The active-site Nucleophile is the S170. D198 functions as the Charge relay system in the catalytic mechanism. Cystine bridges form between C209–C214 and C252–C261. The active-site Charge relay system is H263. 3 cysteine pairs are disulfide-bonded: C278–C302, C279–C327, and C295–C300.

The protein belongs to the AB hydrolase superfamily. Lipase family. Not glycosylated. Expressed by the venom gland.

It localises to the secreted. It carries out the reaction a 1,2-diacyl-sn-glycero-3-phosphocholine + H2O = a 2-acyl-sn-glycero-3-phosphocholine + a fatty acid + H(+). Its function is as follows. Catalyzes the hydrolysis of phosphatidylcholine with phospholipase A1 activity (6.3 U/ml). May act as an allergen and induce hemolytic activity. The protein is Phospholipase A1 2 of Vespa affinis (Lesser banded hornet).